A 532-amino-acid chain; its full sequence is E3 ubiquitin-protein ligase ICP0 (532 aa).

Zn(2+) contacts are provided by C8, C11, C24, H26, C29, C32, C43, and C46. The segment at 8 to 47 (CPICLEDPSNYSMALPCLHAFCYVCITRWIRQNPTCPLCK) adopts an RING-type zinc-finger fold. 4 disordered regions span residues 206-391 (EYID…PMRP), 406-426 (APRD…AGPR), 461-498 (EDES…IRQG), and 510-532 (QTQP…RRNQ). Composition is skewed to acidic residues over residues 217-227 (SEEETDSDIEV) and 234-243 (DPEDTSDETS). Residues 286-295 (RSARLRRRQP) are compositionally biased toward basic residues.

Auto-ubiquitinated.

The catalysed reaction is S-ubiquitinyl-[E2 ubiquitin-conjugating enzyme]-L-cysteine + [acceptor protein]-L-lysine = [E2 ubiquitin-conjugating enzyme]-L-cysteine + N(6)-ubiquitinyl-[acceptor protein]-L-lysine.. Evades nuclear antiviral defenses triggered by dsDNA viruses. Acts during the initial stages of lytic infection and the reactivation of latent viral genome. Prevents the antiviral effect of nuclear bodies by degrading host PML and SP100. The sequence is that of E3 ubiquitin-protein ligase ICP0 (63) from Equus caballus (Horse).